Here is a 215-residue protein sequence, read N- to C-terminus: Cytochrome b6 (215 aa).

Residues 32–52 form a helical membrane-spanning segment; sequence IFYCLGGITLTCFLVQVATGF. Heme c is bound at residue cysteine 35. Residues histidine 86 and histidine 100 each contribute to the heme b site. 3 helical membrane passes run 90-110, 116-136, and 186-206; these read ASMM…TGGF, LTWV…VTGY, and LHTF…FSMI. Histidine 187 and histidine 202 together coordinate heme b.

Belongs to the cytochrome b family. PetB subfamily. The 4 large subunits of the cytochrome b6-f complex are cytochrome b6, subunit IV (17 kDa polypeptide, PetD), cytochrome f and the Rieske protein, while the 4 small subunits are PetG, PetL, PetM and PetN. The complex functions as a dimer. Heme b is required as a cofactor. It depends on heme c as a cofactor.

It is found in the plastid. Its subcellular location is the chloroplast thylakoid membrane. In terms of biological role, component of the cytochrome b6-f complex, which mediates electron transfer between photosystem II (PSII) and photosystem I (PSI), cyclic electron flow around PSI, and state transitions. This Piper cenocladum (Ant piper) protein is Cytochrome b6.